Consider the following 825-residue polypeptide: Exocyst complex component SEC10a (825 aa).

Residues 244 to 266 (RGLEVAVANLQDYCNELENRLLS) are a coiled coil.

The protein belongs to the SEC10 family. The exocyst complex is composed of SEC3, SEC5, SEC6, SEC8, SEC10, EXO70A1 and EXO84B. Interacts with EXO84B. Binds to EXO70E2. Binds directly to B1L. Expressed in seedlings, roots, leaves and flowers.

It localises to the cytoplasm. The protein localises to the cytosol. It is found in the secreted. The protein resides in the extracellular exosome. In terms of biological role, component of the exocyst complex involved in the docking of exocytic vesicles with fusion sites on the plasma membrane during regulated or polarized secretion. Involved in polarized cell growth and organ morphogenesis. During cytokinesis, involved in cell plate initiation, cell plate maturation and formation of new primary cell wall. The polypeptide is Exocyst complex component SEC10a (Arabidopsis thaliana (Mouse-ear cress)).